Reading from the N-terminus, the 106-residue chain is Iron-sulfur cluster assembly protein CyaY (106 aa).

This sequence belongs to the frataxin family.

In terms of biological role, involved in iron-sulfur (Fe-S) cluster assembly. May act as a regulator of Fe-S biogenesis. In Serratia proteamaculans (strain 568), this protein is Iron-sulfur cluster assembly protein CyaY.